Reading from the N-terminus, the 334-residue chain is G-protein coupled receptor 12 (334 aa).

The Extracellular segment spans residues Met1–Asp48. N-linked (GlcNAc...) asparagine glycosylation is found at Asn8 and Asn24. The chain crosses the membrane as a helical span at residues Ile49–Ile69. The Cytoplasmic segment spans residues Phe70 to Ala77. Residues Pro78–Ile98 form a helical membrane-spanning segment. At Thr99–Lys113 the chain is on the extracellular side. Residues Leu114 to Ile134 traverse the membrane as a helical segment. Residues Thr135 to Tyr158 are Cytoplasmic-facing. The helical transmembrane segment at Val159–Trp179 threads the bilayer. At Asn180 to Ala199 the chain is on the extracellular side. A helical transmembrane segment spans residues Ala200–Ile220. Topologically, residues Cys221–Thr252 are cytoplasmic. Residues Leu253 to Ile273 form a helical membrane-spanning segment. The Extracellular segment spans residues Ala274–Tyr282. The helical transmembrane segment at Thr283–Phe303 threads the bilayer. Over Arg304–Val334 the chain is Cytoplasmic. Cys317 carries the S-palmitoyl cysteine lipid modification. A phosphoserine mark is found at Ser330 and Ser332.

This sequence belongs to the G-protein coupled receptor 1 family.

The protein resides in the cell membrane. Promotes neurite outgrowth and blocks myelin inhibition in neurons. Receptor with constitutive G(s) signaling activity that stimulates cyclic AMP production. This chain is G-protein coupled receptor 12 (GPR12), found in Homo sapiens (Human).